The primary structure comprises 471 residues: GTPase Der (471 aa).

2 consecutive EngA-type G domains span residues 5–168 (PVIA…TDLE) and 186–359 (IRVA…DSAF). Residues 11-18 (GRPNVGKS), 58-62 (DTGGI), 120-123 (NKTD), 192-199 (GRPNVGKS), 239-243 (DTAGV), and 304-307 (NKWD) each bind GTP. The 85-residue stretch at 360–444 (IKIGTNELTR…PIRLEFKSGT (85 aa)) folds into the KH-like domain.

The protein belongs to the TRAFAC class TrmE-Era-EngA-EngB-Septin-like GTPase superfamily. EngA (Der) GTPase family. Associates with the 50S ribosomal subunit.

GTPase that plays an essential role in the late steps of ribosome biogenesis. In Alcanivorax borkumensis (strain ATCC 700651 / DSM 11573 / NCIMB 13689 / SK2), this protein is GTPase Der.